A 79-amino-acid polypeptide reads, in one-letter code: Small ribosomal subunit protein bS18c (79 aa).

Belongs to the bacterial ribosomal protein bS18 family. As to quaternary structure, part of the 30S ribosomal subunit.

Its subcellular location is the plastid. The protein localises to the chloroplast. The sequence is that of Small ribosomal subunit protein bS18c from Physcomitrium patens (Spreading-leaved earth moss).